The sequence spans 76 residues: Esculentin-2MT2 (76 aa).

Residues 1 to 22 (MFTLKKSMLLLFFLGTISLSLC) form the signal peptide. The propeptide at 23-37 (EEERSADEDDGEKEV) is removed in mature form. Cysteine 70 and cysteine 76 are oxidised to a cystine.

This sequence belongs to the frog skin active peptide (FSAP) family. Esculentin subfamily. In terms of tissue distribution, expressed by the skin glands.

It is found in the secreted. Its function is as follows. Antimicrobial peptide. Active against a variety of Gram-negative and Gram-positive bacterial strains. Active against fungi. Shows strong hemolytic activity against human erythrocytes. This is Esculentin-2MT2 from Amolops mantzorum (Sichuan torrent frog).